Consider the following 287-residue polypeptide: MTFSQMILNLQNYWQEQGCAIMQPYDMPAGAGTFHPATFLRSLGKKPWAAAYVAPSRRPTDGRYGENPNRLGAYYQFQVLIKPSPDNIQELYLKSLENLGFDLKSHDIRFVEDNWESPSLGAWGLGWEVWLDGMEVTQFTYFQQVGGIAVDLVSAEITYGLERIAMYLQNVDNVYDIVWSEFNGEKIKYADVHKQSEYEFSKYNFEISDVKILNEQFENSYKECKNILEQGLALPAYDYCMLAAHTFNLLDARGSISVAQRQDYMLKIRELSKNCAEIYKKNLNEAE.

It belongs to the class-II aminoacyl-tRNA synthetase family. As to quaternary structure, tetramer of two alpha and two beta subunits.

The protein resides in the cytoplasm. The catalysed reaction is tRNA(Gly) + glycine + ATP = glycyl-tRNA(Gly) + AMP + diphosphate. This Campylobacter jejuni (strain RM1221) protein is Glycine--tRNA ligase alpha subunit.